Consider the following 207-residue polypeptide: Probable GTP-binding protein EngB (207 aa).

Positions 24 to 199 (GGYEVAFAGR…RAIVGAWLGL (176 aa)) constitute an EngB-type G domain. GTP-binding positions include 32-39 (GRSNAGKS), 59-63 (GRTQQ), 77-80 (DLPG), 144-147 (TKAD), and 178-180 (YSG). Residues Ser39 and Thr61 each contribute to the Mg(2+) site.

It belongs to the TRAFAC class TrmE-Era-EngA-EngB-Septin-like GTPase superfamily. EngB GTPase family. The cofactor is Mg(2+).

Functionally, necessary for normal cell division and for the maintenance of normal septation. The polypeptide is Probable GTP-binding protein EngB (Xanthomonas euvesicatoria pv. vesicatoria (strain 85-10) (Xanthomonas campestris pv. vesicatoria)).